The following is a 420-amino-acid chain: Mannose-1-phosphate guanylyltransferase regulatory subunit alpha (420 aa).

Residues 2-251 (LKAVILIGGP…DGIWSQIKSA (250 aa)) form a substrate-binding domain region. Residues E85 and Q247 each coordinate GDP-alpha-D-mannose. Residues 273–420 (LAKHTPGGPW…SRSFTNQIIL (148 aa)) are hexapeptide repeat domain. The C-loop stretch occupies residues 356 to 384 (TPSDPNPNDPRARMDSESLFKDGKLLPAI).

Belongs to the transferase hexapeptide repeat family. In terms of assembly, component of the GMPPA-GMPPB mannose-1-phosphate guanylyltransferase complex composed of 4 GMPPA subunits and 8 GMPPB subunits; the complex is organized into three layers, a central layer made up of 2 GMPPA dimers sandwiched between two layers each made up of 2 GMPPB dimers. In terms of tissue distribution, expressed in fibroblasts (at protein level).

The protein localises to the cytoplasm. In terms of biological role, regulatory subunit of the GMPPA-GMPPB mannose-1-phosphate guanylyltransferase complex; reduces the catalytic activity of GMPPB when part of the complex. Mediates allosteric feedback inhibition of GMPPB catalytic activity upon binding GDP-alpha-D-mannose. Together with GMPPB regulates GDP-alpha-D-mannose levels. This chain is Mannose-1-phosphate guanylyltransferase regulatory subunit alpha, found in Homo sapiens (Human).